The chain runs to 176 residues: Macro domain-containing protein mll7730 (176 aa).

One can recognise a Macro domain in the interval 1-174 (MSKALDRIRI…LYLRAVAALR (174 aa)).

It belongs to the MacroD-type family.

This chain is Macro domain-containing protein mll7730, found in Mesorhizobium japonicum (strain LMG 29417 / CECT 9101 / MAFF 303099) (Mesorhizobium loti (strain MAFF 303099)).